The primary structure comprises 184 residues: uncharacterized protein (184 aa).

This is an uncharacterized protein from Clostridium acetobutylicum (strain ATCC 824 / DSM 792 / JCM 1419 / IAM 19013 / LMG 5710 / NBRC 13948 / NRRL B-527 / VKM B-1787 / 2291 / W).